Reading from the N-terminus, the 368-residue chain is Outer membrane protein assembly factor BamC (368 aa).

The first 18 residues, 1–18, serve as a signal peptide directing secretion; it reads MTTKFFIGTAIAVSVLSA. Residue cysteine 19 is the site of N-palmitoyl cysteine attachment. A lipid anchor (S-diacylglycerol cysteine) is attached at cysteine 19.

This sequence belongs to the BamC family. Part of the Bam complex.

The protein resides in the cell outer membrane. Its function is as follows. Part of the outer membrane protein assembly complex, which is involved in assembly and insertion of beta-barrel proteins into the outer membrane. This is Outer membrane protein assembly factor BamC from Pseudoalteromonas atlantica (strain T6c / ATCC BAA-1087).